Here is a 124-residue protein sequence, read N- to C-terminus: Small ribosomal subunit protein uS13c (124 aa).

Residues 100-124 are disordered; the sequence is GQRTRTNARTRKGKVKTAVAKKKGR. Positions 101–124 are enriched in basic residues; the sequence is QRTRTNARTRKGKVKTAVAKKKGR.

This sequence belongs to the universal ribosomal protein uS13 family. In terms of assembly, part of the 30S ribosomal subunit.

The protein resides in the plastid. Its subcellular location is the chloroplast. Its function is as follows. Located at the top of the head of the 30S subunit, it contacts several helices of the 16S rRNA. This is Small ribosomal subunit protein uS13c from Emiliania huxleyi (Coccolithophore).